Reading from the N-terminus, the 551-residue chain is Rqc2 homolog RqcH (551 aa).

The protein belongs to the NEMF family. Associates with stalled 50S ribosomal subunits, binds to RqcP. Interacts with human fibronectin.

Its subcellular location is the secreted. It localises to the capsule. The protein resides in the cell surface. The protein localises to the cytoplasm. In terms of biological role, key component of the ribosome quality control system (RQC), a ribosome-associated complex that mediates the extraction of incompletely synthesized nascent chains from stalled ribosomes and their subsequent degradation. RqcH recruits Ala-charged tRNA, and with RqcP directs the elongation of stalled nascent chains on 50S ribosomal subunits, leading to non-templated C-terminal alanine extensions (Ala tail). The Ala tail promotes nascent chain degradation. May add between 1 and at least 8 Ala residues. Binds to stalled 50S ribosomal subunits. Its function is as follows. Plays a significant role in virulence. Recombinant protein binds to immobilized human fibronectin; binding is saturable and competed by heparin. Purified protein inhibits binding of whole cells to fibronectin. This chain is Rqc2 homolog RqcH, found in Streptococcus pneumoniae serotype 2 (strain D39 / NCTC 7466).